The sequence spans 137 residues: MAQLTVQVVTPDGIRYDHHASLITVRTPDGEMGILPGHINLIAPLIVHQMKINRSHQEGVDWVAVNGGIIEVNEDQVTIVADSAERARDIDLNRAERAKERAERALEKAQTTQNIDEMRRAEVALRRAINRISVGKK.

This sequence belongs to the ATPase epsilon chain family. F-type ATPases have 2 components, CF(1) - the catalytic core - and CF(0) - the membrane proton channel. CF(1) has five subunits: alpha(3), beta(3), gamma(1), delta(1), epsilon(1). CF(0) has three main subunits: a, b and c.

The protein resides in the cell membrane. Produces ATP from ADP in the presence of a proton gradient across the membrane. This Streptococcus agalactiae serotype III (strain NEM316) protein is ATP synthase epsilon chain.